The following is a 129-amino-acid chain: Transcription antitermination protein NusB (129 aa).

This sequence belongs to the NusB family.

Functionally, involved in transcription antitermination. Required for transcription of ribosomal RNA (rRNA) genes. Binds specifically to the boxA antiterminator sequence of the ribosomal RNA (rrn) operons. This is Transcription antitermination protein NusB from Staphylococcus aureus (strain bovine RF122 / ET3-1).